The sequence spans 552 residues: DNA ligase (552 aa).

ATP is bound at residue glutamate 229. The active-site N6-AMP-lysine intermediate is lysine 231. ATP contacts are provided by arginine 236 and glutamate 283. Glutamate 283 and glutamate 377 together coordinate Mg(2+). The ATP site is built by lysine 382 and lysine 397.

This sequence belongs to the ATP-dependent DNA ligase family. In terms of assembly, interacts with host TOP2A and TOP2B. Mg(2+) is required as a cofactor.

It localises to the host cytoplasm. The enzyme catalyses ATP + (deoxyribonucleotide)n-3'-hydroxyl + 5'-phospho-(deoxyribonucleotide)m = (deoxyribonucleotide)n+m + AMP + diphosphate.. DNA ligase that seals nicks in double-stranded DNA during DNA replication, DNA recombination and DNA repair. Recruits cellular topoisomerase II to sites of viral replication and assembly. Contributes to the repair of the viral genome following UV irradiation. This is DNA ligase (OPG180) from Vaccinia virus (strain Western Reserve) (VACV).